A 750-amino-acid chain; its full sequence is Photosystem I P700 chlorophyll a apoprotein A1 (750 aa).

Helical transmembrane passes span 70-93 (VFSA…FHGA), 156-179 (LYCT…FHYH), 195-219 (LNHH…HVSL), 291-309 (IAHH…GHMY), 346-369 (WHAQ…HHMY), 385-411 (LSLF…IFMV), 433-455 (AIIS…LYIH), and 531-549 (FLVH…LILL). Positions 573 and 582 each coordinate [4Fe-4S] cluster. 2 helical membrane-spanning segments follow: residues 589-610 (HVFL…HFSW) and 664-686 (LSAY…MFLF). Histidine 675 provides a ligand contact to chlorophyll a'. The chlorophyll a site is built by methionine 683 and tyrosine 691. Tryptophan 692 serves as a coordination point for phylloquinone. The helical transmembrane segment at 724-744 (AVGVTHYLLGGIATTWAFFLA) threads the bilayer.

Belongs to the PsaA/PsaB family. In terms of assembly, the PsaA/B heterodimer binds the P700 chlorophyll special pair and subsequent electron acceptors. PSI consists of a core antenna complex that captures photons, and an electron transfer chain that converts photonic excitation into a charge separation. The eukaryotic PSI reaction center is composed of at least 11 subunits. P700 is a chlorophyll a/chlorophyll a' dimer, A0 is one or more chlorophyll a, A1 is one or both phylloquinones and FX is a shared 4Fe-4S iron-sulfur center. is required as a cofactor.

The protein localises to the plastid. The protein resides in the chloroplast thylakoid membrane. The catalysed reaction is reduced [plastocyanin] + hnu + oxidized [2Fe-2S]-[ferredoxin] = oxidized [plastocyanin] + reduced [2Fe-2S]-[ferredoxin]. PsaA and PsaB bind P700, the primary electron donor of photosystem I (PSI), as well as the electron acceptors A0, A1 and FX. PSI is a plastocyanin-ferredoxin oxidoreductase, converting photonic excitation into a charge separation, which transfers an electron from the donor P700 chlorophyll pair to the spectroscopically characterized acceptors A0, A1, FX, FA and FB in turn. Oxidized P700 is reduced on the lumenal side of the thylakoid membrane by plastocyanin. The protein is Photosystem I P700 chlorophyll a apoprotein A1 of Jasminum nudiflorum (Winter jasmine).